The following is a 145-amino-acid chain: tRNA-specific adenosine deaminase (145 aa).

The CMP/dCMP-type deaminase domain maps to 1–116 (MREALKQAEI…SNLRYFNSKA (116 aa)). A Zn(2+)-binding site is contributed by His48. Glu50 acts as the Proton donor in catalysis. Positions 78 and 81 each coordinate Zn(2+).

The protein belongs to the cytidine and deoxycytidylate deaminase family. In terms of assembly, homodimer. Zn(2+) is required as a cofactor.

It carries out the reaction adenosine(34) in tRNA + H2O + H(+) = inosine(34) in tRNA + NH4(+). In terms of biological role, catalyzes the deamination of adenosine to inosine at the wobble position 34 of tRNA(Arg2). This is tRNA-specific adenosine deaminase from Rickettsia bellii (strain RML369-C).